The sequence spans 266 residues: MSEPEVTYSTVRLHKSSGLQRLVSHEEIQGPGEAGYRKCSVPWQLTVRSLGIFCFLLLVTVAVLAVKIFQYSQHKQEIHETLNHNHNCSNMQSDIKLKEEMLRNKSIDCSPGEELLESLNREQNRWYSETKTDLDSSQDTGTGVKHWFCYGTKCFYFIMSKNTWSGCKQTCQHYSLPLVKIEDEDELKFLQFQVISDSYWIGLSYDKKKKQWAWIDNGPSKLDMKTRKMNFKPGGCIFLSKTRLEDTNCNNSYFCICGKKLDHFPG.

The Cytoplasmic portion of the chain corresponds to 1–44; sequence MSEPEVTYSTVRLHKSSGLQRLVSHEEIQGPGEAGYRKCSVPWQ. A helical; Signal-anchor for type II membrane protein membrane pass occupies residues 45–66; that stretch reads LTVRSLGIFCFLLLVTVAVLAV. At 67–266 the chain is on the extracellular side; the sequence is KIFQYSQHKQ…CGKKLDHFPG (200 aa). N-linked (GlcNAc...) asparagine glycosylation is found at asparagine 87 and asparagine 104. Residues 143-261 enclose the C-type lectin domain; it reads GVKHWFCYGT…SYFCICGKKL (119 aa). 4 disulfide bridges follow: cysteine 149/cysteine 154, cysteine 167/cysteine 255, cysteine 171/cysteine 257, and cysteine 236/cysteine 249. Asparagine 250 carries an N-linked (GlcNAc...) asparagine glycan.

Homodimer; disulfide-linked. In terms of tissue distribution, mostly expressed in NK cells, but also observed on NK T and memory T-cells.

The protein resides in the membrane. In terms of biological role, receptor on natural killer (NK) cells for class I MHC. The protein is Killer cell lectin-like receptor 5 (Klra5) of Mus musculus (Mouse).